Reading from the N-terminus, the 495-residue chain is Potassium voltage-gated channel subfamily A member 1 (495 aa).

A disordered region spans residues 1–30 (MTVMSGENADEASTAPGHPQDGSYPRQADH). The segment at 1 to 128 (MTVMSGENAD…FYELGEEAME (128 aa)) is tetramerization domain. Topologically, residues 1–164 (MTVMSGENAD…LLFEYPESSG (164 aa)) are cytoplasmic. S23 bears the Phosphoserine mark. A helical membrane pass occupies residues 165–186 (PARVIAIVSVMVILISIVIFCL). The Extracellular segment spans residues 187–220 (ETLPELKDDKDFTGTIHRIDNTTVIYTSNIFTDP). Residue N207 is glycosylated (N-linked (GlcNAc...) asparagine). A helical membrane pass occupies residues 221-242 (FFIVETLCIIWFSFELVVRFFA). Residue C243 is the site of S-palmitoyl cysteine attachment. The Cytoplasmic segment spans residues 243–253 (CPSKTDFFKNI). Residues 254–274 (MNFIDIVAIIPYFITLGTEIA) form a helical membrane-spanning segment. The Extracellular segment spans residues 275 to 287 (EQEGNQKGEQATS). A helical; Voltage-sensor transmembrane segment spans residues 288-308 (LAILRVIRLVRVFRIFKLSRH). The Cytoplasmic portion of the chain corresponds to 309 to 323 (SKGLQILGQTLKASM). The S4-S5 linker stretch occupies residues 310 to 323 (KGLQILGQTLKASM). Residue S322 is modified to Phosphoserine; by PKA. The helical transmembrane segment at 324–345 (RELGLLIFFLFIGVILFSSAVY) threads the bilayer. Residues 346 to 359 (FAEAEEAESHFSSI) are Extracellular-facing. An intramembrane region (helical) is located at residues 360-371 (PDAFWWAVVSMT). The Selectivity filter motif lies at 372–377 (TVGYGD). An intramembrane segment occupies 372–379 (TVGYGDMY). Residues 380–386 (PVTIGGK) are Extracellular-facing. The chain crosses the membrane as a helical span at residues 387 to 415 (IVGSLCAIAGVLTIALPVPVIVSNFNYFY). Residues 416 to 495 (HRETEGEEQA…VNKSKLLTDV (80 aa)) are Cytoplasmic-facing. S437 and S439 each carry phosphoserine. A Phosphoserine; by PKA modification is found at S446. The PDZ-binding motif lies at 493 to 495 (TDV).

The protein belongs to the potassium channel family. A (Shaker) (TC 1.A.1.2) subfamily. Kv1.1/KCNA1 sub-subfamily. In terms of assembly, homotetramer and heterotetramer with other channel-forming alpha subunits, such as KCNA2, KCNA4, KCNA5, KCNA6 and KCNA7. Channel activity is regulated by interaction with the beta subunits KCNAB1 and KCNAB2. Identified in a complex with KCNA2 and KCNAB2. Interacts (via C-terminus) with the PDZ domains of DLG1, DLG2 and DLG4. Interacts with LGI1 within a complex containing LGI1, KCNA4 and KCNAB1. Interacts (via N-terminus) with STX1A; this promotes channel inactivation. Interacts (via N-terminus) with the heterodimer formed by GNB1 and GNG2; this promotes channel inactivation. Can interact simultaneously with STX1A and the heterodimer formed by GNB1 and GNG2. Interacts (via cytoplasmic N-terminal domain) with KCNRG; this inhibits channel activity. Interacts with ANK3; this inhibits channel activity. Interacts with ADAM11. Post-translationally, N-glycosylated. In terms of processing, palmitoylated on Cys-243; which may be required for membrane targeting. Phosphorylated on tyrosine residues. Phosphorylation increases in response to NRG1; this inhibits channel activity. Phosphorylation at Ser-446 regulates channel activity by down-regulating expression at the cell membrane. In terms of tissue distribution, detected in brain. Expressed in cerebellar cortex basket cell terminals, the area surround the Purkinje cell soma, and the pinceaux expansions encircling the axon initial segment (at protein level). Detected in the juxtaparanodal regions of the nodes of Ranvier in myelinated axons. Detected in the paranodal region in sciatic nerve. Detected on cell bodies in cerebellum, dorsal and ventral cochlear nucleus, pontine reticular nucleus, mesencephalic trigeminal nucleus, motor trigeminal nucleus and the pricipal sensory trigeminal nucleus. Detected in terminal fields of basket cells in the cerebellum corpus medullare. Detected in hippocampus CA3 pyramidal neurons and in the hilus and stratum moleculare of the dentate gyrus. Detected in the central nucleus and the external nucleus of the inferior colliculus. Detected in fiber tracts in the optic tract, external medullary lamina, stria terminalis, medulla, ventral pallidum and substantia nigra. Detected in neurons from dorsal root ganglion. Detected in neurons in the medial nucleus of the trapezoid body. Detected in midbrain dopamine neuron axon terminals. Detected in brain cortex. Detected in brainstem. Detected in juxtaparanodal regions of the nodes of Ranvier in the vagus nerve, but only at very low levels in the heart. Detected in the islet of Langerhans. Detected at the luminal membrane in distal convoluted tubules in the kidney (at protein level). Detected in hippocampus, thalamus, neocortex and ventral brain cortex, including the piriform and entorhinal cortex and the amygdala. Detected in midbrain dopamine neurons. Detected in heart atrium, ventricle, sinoatrial node and atrioventricular node.

The protein localises to the cell membrane. It is found in the cell projection. The protein resides in the axon. It localises to the membrane. Its subcellular location is the perikaryon. The protein localises to the dendrite. It is found in the cell junction. The protein resides in the synapse. It localises to the cytoplasmic vesicle. Its subcellular location is the endoplasmic reticulum. The protein localises to the presynaptic cell membrane. It is found in the presynapse. It carries out the reaction K(+)(in) = K(+)(out). Its activity is regulated as follows. Inhibited by 4-aminopyridine (4-AP), tetraethylammonium (TEA) and dendrotoxin (DTX), but not by charybdotoxin (CTX). Its function is as follows. Voltage-gated potassium channel that mediates transmembrane potassium transport in excitable membranes, primarily in the brain and the central nervous system, but also in the kidney. Contributes to the regulation of the membrane potential and nerve signaling, and prevents neuronal hyperexcitability. Forms tetrameric potassium-selective channels through which potassium ions pass in accordance with their electrochemical gradient. The channel alternates between opened and closed conformations in response to the voltage difference across the membrane. Can form functional homotetrameric channels and heterotetrameric channels that contain variable proportions of KCNA1, KCNA2, KCNA4, KCNA5, KCNA6, KCNA7, and possibly other family members as well; channel properties depend on the type of alpha subunits that are part of the channel. Channel properties are modulated by cytoplasmic beta subunits that regulate the subcellular location of the alpha subunits and promote rapid inactivation of delayed rectifier potassium channels. In vivo, membranes probably contain a mixture of heteromeric potassium channel complexes, making it difficult to assign currents observed in intact tissues to any particular potassium channel family member. Homotetrameric KCNA1 forms a delayed-rectifier potassium channel that opens in response to membrane depolarization, followed by slow spontaneous channel closure. In contrast, a heterotetrameric channel formed by KCNA1 and KCNA4 shows rapid inactivation. Regulates neuronal excitability in hippocampus, especially in mossy fibers and medial perforant path axons, preventing neuronal hyperexcitability. May function as down-stream effector for G protein-coupled receptors and inhibit GABAergic inputs to basolateral amygdala neurons. May contribute to the regulation of neurotransmitter release, such as gamma-aminobutyric acid (GABA) release. Plays a role in regulating the generation of action potentials and preventing hyperexcitability in myelinated axons of the vagus nerve, and thereby contributes to the regulation of heart contraction. Required for normal neuromuscular responses. Regulates the frequency of neuronal action potential firing in response to mechanical stimuli, and plays a role in the perception of pain caused by mechanical stimuli, but does not play a role in the perception of pain due to heat stimuli. Required for normal responses to auditory stimuli and precise location of sound sources, but not for sound perception. The use of toxins that block specific channels suggest that it contributes to the regulation of the axonal release of the neurotransmitter dopamine. Required for normal postnatal brain development and normal proliferation of neuronal precursor cells in the brain. Plays a role in the reabsorption of Mg(2+) in the distal convoluted tubules in the kidney and in magnesium ion homeostasis, probably via its effect on the membrane potential. This is Potassium voltage-gated channel subfamily A member 1 from Mus musculus (Mouse).